The following is a 209-amino-acid chain: Uracil phosphoribosyltransferase (209 aa).

5-phospho-alpha-D-ribose 1-diphosphate is bound by residues Arg79, Arg104, and 131 to 139 (DPMLATGGS). Uracil contacts are provided by residues Ile194 and 199–201 (GDA). Residue Asp200 coordinates 5-phospho-alpha-D-ribose 1-diphosphate.

This sequence belongs to the UPRTase family. Mg(2+) is required as a cofactor.

The catalysed reaction is UMP + diphosphate = 5-phospho-alpha-D-ribose 1-diphosphate + uracil. It functions in the pathway pyrimidine metabolism; UMP biosynthesis via salvage pathway; UMP from uracil: step 1/1. Its activity is regulated as follows. Allosterically activated by GTP. In terms of biological role, catalyzes the conversion of uracil and 5-phospho-alpha-D-ribose 1-diphosphate (PRPP) to UMP and diphosphate. The polypeptide is Uracil phosphoribosyltransferase (Chromohalobacter salexigens (strain ATCC BAA-138 / DSM 3043 / CIP 106854 / NCIMB 13768 / 1H11)).